The primary structure comprises 375 residues: RNA exonuclease 4 (375 aa).

The interval 21–78 is disordered; sequence KTLGSDASSSSASSSTNNRRKLSTSESTKPKRTRLDAKEKDAEGSKSCSPAPTSLPWF. Residues 25–35 show a composition bias toward low complexity; the sequence is SDASSSSASSS. Residues 53-64 are compositionally biased toward basic and acidic residues; the sequence is TRLDAKEKDAEG. The Exonuclease domain maps to 134 to 297; it reads NYLAIDCEMV…FRSQKPKWDE (164 aa).

The protein belongs to the REXO4 family.

It is found in the nucleus. Functionally, exoribonuclease involved in ribosome biosynthesis. Involved in the processing of ITS1, the internal transcribed spacer localized between the 18S and 5.8S rRNAs. This chain is RNA exonuclease 4 (REX4), found in Mycosarcoma maydis (Corn smut fungus).